Here is a 505-residue protein sequence, read N- to C-terminus: Trans-cinnamate 4-monooxygenase (505 aa).

Residues 3–23 (LLLLEKTLLALFIAATIAITI) form a helical membrane-spanning segment. Residues 212–217 (RSRLAQ) and Ala305 contribute to the (E)-cinnamate site. Cys446 serves as a coordination point for heme.

It belongs to the cytochrome P450 family. Heme is required as a cofactor.

It is found in the membrane. The enzyme catalyses (E)-cinnamate + reduced [NADPH--hemoprotein reductase] + O2 = (E)-4-coumarate + oxidized [NADPH--hemoprotein reductase] + H2O + H(+). Its pathway is phenylpropanoid metabolism; trans-4-coumarate biosynthesis; trans-4-coumarate from trans-cinnamate: step 1/1. Its function is as follows. Catalyzes the first oxidative step of the phenylpropanoid pathway in higher plants by transforming trans-cinnamate into p-coumarate. The compounds formed by this pathway are essential components for lignification, pollination, and defense against ultraviolet light, predators and pathogens. This chain is Trans-cinnamate 4-monooxygenase (CYP73A19), found in Cicer arietinum (Chickpea).